The primary structure comprises 844 residues: Saxiphilin (844 aa).

Positions methionine 1 to alanine 19 are cleaved as a signal peptide. Residues valine 26–aspartate 106 form the Transferrin-like 1; first part domain. Disulfide bonds link cysteine 29–cysteine 64, cysteine 39–cysteine 55, cysteine 110–cysteine 130, cysteine 141–cysteine 148, cysteine 150–cysteine 172, cysteine 180–cysteine 202, cysteine 222–cysteine 244, cysteine 277–cysteine 360, cysteine 322–cysteine 335, cysteine 332–cysteine 343, cysteine 388–cysteine 402, cysteine 495–cysteine 527, cysteine 505–cysteine 518, cysteine 552–cysteine 839, cysteine 570–cysteine 799, cysteine 607–cysteine 685, cysteine 641–cysteine 655, cysteine 652–cysteine 668, and cysteine 725–cysteine 739. Thyroglobulin type-1 domains are found at residues leucine 107 to cysteine 172 and leucine 177 to cysteine 244. An absent in transferrins region spans residues lysine 109 to leucine 249. The 238-residue stretch at glutamine 245 to glycine 482 folds into the Transferrin-like 1; second part domain. Positions valine 492–arginine 828 constitute a Transferrin-like 2 domain.

This sequence belongs to the transferrin family. Monomer. In terms of tissue distribution, plasma. Highest levels of transcripts found in the liver, the lung, the pancreas and the brain.

It is found in the secreted. Functionally, binds specifically to the neurotoxin saxitoxin. Its physiological role may be to transport or sequester an endogenous organic molecule other than Fe(3+). It may participate in a detoxification mechanism for neutralizing a microbial toxin. In Aquarana catesbeiana (American bullfrog), this protein is Saxiphilin.